Consider the following 185-residue polypeptide: NAD(P)H-quinone oxidoreductase subunit J (185 aa).

Belongs to the complex I 30 kDa subunit family. As to quaternary structure, NDH-1 can be composed of about 15 different subunits; different subcomplexes with different compositions have been identified which probably have different functions.

The protein resides in the cellular thylakoid membrane. It carries out the reaction a plastoquinone + NADH + (n+1) H(+)(in) = a plastoquinol + NAD(+) + n H(+)(out). The enzyme catalyses a plastoquinone + NADPH + (n+1) H(+)(in) = a plastoquinol + NADP(+) + n H(+)(out). Its function is as follows. NDH-1 shuttles electrons from an unknown electron donor, via FMN and iron-sulfur (Fe-S) centers, to quinones in the respiratory and/or the photosynthetic chain. The immediate electron acceptor for the enzyme in this species is believed to be plastoquinone. Couples the redox reaction to proton translocation, and thus conserves the redox energy in a proton gradient. Cyanobacterial NDH-1 also plays a role in inorganic carbon-concentration. The chain is NAD(P)H-quinone oxidoreductase subunit J from Prochlorococcus marinus (strain MIT 9303).